The chain runs to 197 residues: 5'-deoxynucleotidase YPTB2590 (197 aa).

Substrate contacts are provided by residues 16 to 17 (RW) and His-31. Residues 28 to 140 (VSEHSLQVAF…VKQADALCAY (113 aa)) form the HD domain. Residues His-31, His-66, and Asp-67 each contribute to the a divalent metal cation site. Residues Asp-67, 75-78 (DLPT), and Asp-135 contribute to the substrate site. Asp-135 provides a ligand contact to a divalent metal cation.

It belongs to the 5DNU family. As to quaternary structure, homodimer. A divalent metal cation serves as cofactor.

It localises to the cytoplasm. The enzyme catalyses a 2'-deoxyribonucleoside 5'-phosphate + H2O = a 2'-deoxyribonucleoside + phosphate. In terms of biological role, catalyzes the strictly specific dephosphorylation of 2'-deoxyribonucleoside 5'-monophosphates. In Yersinia pseudotuberculosis serotype I (strain IP32953), this protein is 5'-deoxynucleotidase YPTB2590.